Here is a 442-residue protein sequence, read N- to C-terminus: Glutamate-1-semialdehyde 2,1-aminomutase (442 aa).

At lysine 282 the chain carries N6-(pyridoxal phosphate)lysine.

The protein belongs to the class-III pyridoxal-phosphate-dependent aminotransferase family. HemL subfamily. In terms of assembly, homodimer. The cofactor is pyridoxal 5'-phosphate.

It is found in the cytoplasm. The enzyme catalyses (S)-4-amino-5-oxopentanoate = 5-aminolevulinate. The protein operates within porphyrin-containing compound metabolism; protoporphyrin-IX biosynthesis; 5-aminolevulinate from L-glutamyl-tRNA(Glu): step 2/2. This is Glutamate-1-semialdehyde 2,1-aminomutase from Polaromonas naphthalenivorans (strain CJ2).